The chain runs to 154 residues: Ribosome maturation factor RimP (154 aa).

It belongs to the RimP family.

Its subcellular location is the cytoplasm. Functionally, required for maturation of 30S ribosomal subunits. The chain is Ribosome maturation factor RimP from Clostridium novyi (strain NT).